We begin with the raw amino-acid sequence, 381 residues long: GDP-mannose-dependent alpha-(1-6)-phosphatidylinositol dimannoside mannosyltransferase (381 aa).

Substrate contacts are provided by residues glycine 16, arginine 207, 211–212 (EK), 283–287 (ETFGL), and glutamate 291.

Belongs to the glycosyltransferase group 1 family. Glycosyltransferase 4 subfamily.

It participates in phospholipid metabolism; phosphatidylinositol metabolism. In terms of biological role, catalyzes the addition of a mannose residue from GDP-D-mannose to the position 6 of the alpha-1,6-linked mannose residue of the triacyl phosphatidylinositol dimannoside (Ac3PIM2) to generate triacyl phosphatidylinositol trimannoside (Ac3PIM3). The protein is GDP-mannose-dependent alpha-(1-6)-phosphatidylinositol dimannoside mannosyltransferase (pimC) of Mycobacterium tuberculosis (strain ATCC 25177 / H37Ra).